We begin with the raw amino-acid sequence, 274 residues long: ATP synthase subunit delta (274 aa).

This sequence belongs to the ATPase delta chain family. In terms of assembly, F-type ATPases have 2 components, F(1) - the catalytic core - and F(0) - the membrane proton channel. F(1) has five subunits: alpha(3), beta(3), gamma(1), delta(1), epsilon(1). F(0) has three main subunits: a(1), b(2) and c(10-14). The alpha and beta chains form an alternating ring which encloses part of the gamma chain. F(1) is attached to F(0) by a central stalk formed by the gamma and epsilon chains, while a peripheral stalk is formed by the delta and b chains.

The protein resides in the cell membrane. F(1)F(0) ATP synthase produces ATP from ADP in the presence of a proton or sodium gradient. F-type ATPases consist of two structural domains, F(1) containing the extramembraneous catalytic core and F(0) containing the membrane proton channel, linked together by a central stalk and a peripheral stalk. During catalysis, ATP synthesis in the catalytic domain of F(1) is coupled via a rotary mechanism of the central stalk subunits to proton translocation. Functionally, this protein is part of the stalk that links CF(0) to CF(1). It either transmits conformational changes from CF(0) to CF(1) or is implicated in proton conduction. The sequence is that of ATP synthase subunit delta from Acidothermus cellulolyticus (strain ATCC 43068 / DSM 8971 / 11B).